The sequence spans 299 residues: Trimeric intracellular cation channel type A (299 aa).

Residues 1 to 18 (MELLSALSLGELALSFSR) are Lumenal-facing. The chain crosses the membrane as a helical span at residues 19–39 (VPLFPVFDLSYFIVSILYLKY). Residues 40 to 51 (EPGAVELSRRHP) lie on the Cytoplasmic side of the membrane. Residues 52–72 (IASWLCAMLHCFGSYILADLL) traverse the membrane as a helical segment. Residues 73–85 (LGEPLIDYFSNNS) are Lumenal-facing. Glycine 74 is a Ca(2+) binding site. The chain crosses the membrane as a helical span at residues 86 to 106 (SILLASAVWYLIFFCPLDLFY). Residues 107–144 (KCVCFLPVKLIFVAMKEVVRVRKIAVGIHHAHHHYHHG) lie on the Cytoplasmic side of the membrane. Residues lysine 122 and arginine 126 each coordinate a 1,2-diacyl-sn-glycero-3-phospho-(1D-myo-inositol-4,5-bisphosphate). The chain crosses the membrane as a helical span at residues 145–165 (WFVMIATGWVKGSGVALMSNF). Over 166 to 178 (EQLLRGVWKPETN) the chain is Lumenal. A helical transmembrane segment spans residues 179-199 (EILHMSFPTKASLYGAILFTL). The Cytoplasmic portion of the chain corresponds to 200–209 (QQTRWLPVSK). A helical membrane pass occupies residues 210–230 (ASLIFIFTLFMVSCKVFLTAT). Topologically, residues 231-234 (HSHS) are lumenal. The helical transmembrane segment at 235 to 255 (SPFDALEGYICPVLFGSACGG) threads the bilayer. Over 256-299 (DHHHDNHGGSHSGGGPGAQHSAMPAKSKEELSEGSRKKKAKKAD) the chain is Cytoplasmic. The disordered stretch occupies residues 260 to 299 (DNHGGSHSGGGPGAQHSAMPAKSKEELSEGSRKKKAKKAD). Residues 281 to 290 (KSKEELSEGS) show a composition bias toward basic and acidic residues.

It belongs to the TMEM38 family. As to quaternary structure, homotrimer; conformation seems to be controled by binding to diacylglycerol (DAG).

The protein localises to the sarcoplasmic reticulum membrane. It localises to the nucleus membrane. The enzyme catalyses K(+)(in) = K(+)(out). Channel activity is activated by a change of voltage within the sarcoplasmic reticulum lumen and blocked by luminal high Ca(2+) levels. Functionally, intracellular monovalent cation channel required for maintenance of rapid intracellular calcium release. Acts as a potassium counter-ion channel that functions in synchronization with calcium release from intracellular stores. Opened by a change of voltage within the sarcoplasmic reticulum lumen. The chain is Trimeric intracellular cation channel type A from Homo sapiens (Human).